A 436-amino-acid polypeptide reads, in one-letter code: UDP-N-acetylmuramate--L-alanine ligase (436 aa).

108–114 is an ATP binding site; it reads GAHGKTS.

It belongs to the MurCDEF family.

The protein resides in the cytoplasm. The catalysed reaction is UDP-N-acetyl-alpha-D-muramate + L-alanine + ATP = UDP-N-acetyl-alpha-D-muramoyl-L-alanine + ADP + phosphate + H(+). Its pathway is cell wall biogenesis; peptidoglycan biosynthesis. Functionally, cell wall formation. The polypeptide is UDP-N-acetylmuramate--L-alanine ligase (Bacillus cereus (strain G9842)).